The chain runs to 436 residues: Methylenetetrahydrofolate--tRNA-(uracil-5-)-methyltransferase TrmFO (436 aa).

Position 9 to 14 (9 to 14 (GAGLAG)) interacts with FAD.

The protein belongs to the MnmG family. TrmFO subfamily. FAD is required as a cofactor.

It is found in the cytoplasm. The enzyme catalyses uridine(54) in tRNA + (6R)-5,10-methylene-5,6,7,8-tetrahydrofolate + NADH + H(+) = 5-methyluridine(54) in tRNA + (6S)-5,6,7,8-tetrahydrofolate + NAD(+). It carries out the reaction uridine(54) in tRNA + (6R)-5,10-methylene-5,6,7,8-tetrahydrofolate + NADPH + H(+) = 5-methyluridine(54) in tRNA + (6S)-5,6,7,8-tetrahydrofolate + NADP(+). Functionally, catalyzes the folate-dependent formation of 5-methyl-uridine at position 54 (M-5-U54) in all tRNAs. The sequence is that of Methylenetetrahydrofolate--tRNA-(uracil-5-)-methyltransferase TrmFO from Ligilactobacillus salivarius (strain UCC118) (Lactobacillus salivarius).